The primary structure comprises 353 residues: tRNA-specific 2-thiouridylase MnmA 2 (353 aa).

ATP-binding positions include 9 to 16 and M35; that span reads AMSGGVDS. The Nucleophile role is filled by C98. A disulfide bridge links C98 with C194. G122 serves as a coordination point for ATP. Positions 144 to 146 are interaction with tRNA; sequence KDQ. The active-site Cysteine persulfide intermediate is the C194. The tract at residues 300-301 is interaction with tRNA; that stretch reads RY.

The protein belongs to the MnmA/TRMU family.

The protein localises to the cytoplasm. The enzyme catalyses S-sulfanyl-L-cysteinyl-[protein] + uridine(34) in tRNA + AH2 + ATP = 2-thiouridine(34) in tRNA + L-cysteinyl-[protein] + A + AMP + diphosphate + H(+). In terms of biological role, catalyzes the 2-thiolation of uridine at the wobble position (U34) of tRNA, leading to the formation of s(2)U34. The chain is tRNA-specific 2-thiouridylase MnmA 2 from Clostridium botulinum (strain Loch Maree / Type A3).